The following is a 251-amino-acid chain: MKLASLLAAQWRALVLSTGFLTRLAPARAATDAEMAAGVAHYPLVGLLAGLVCAGPFLLGLLAGHPWVQALGYAALLLWATRGLHWDGWADLMDAWGSSATGDRFWDILKDSRIGAFGVLGIVFGVLGQVVLAHEVITLGRAGALVWAPVLGRAACVVLAACVPPGTRSTLGRLTSAGATHMTVLFCAGVTAATGVALAGPPAVLAAALPCACAVVWLTALARREGGLNGDFLGACIIQGELSALLGTILA.

5 helical membrane passes run L44–G64, I114–H134, G143–V163, A177–A197, and L198–L218.

The protein belongs to the CobS family. Mg(2+) serves as cofactor.

It localises to the cell inner membrane. It carries out the reaction alpha-ribazole + adenosylcob(III)inamide-GDP = adenosylcob(III)alamin + GMP + H(+). The catalysed reaction is alpha-ribazole 5'-phosphate + adenosylcob(III)inamide-GDP = adenosylcob(III)alamin 5'-phosphate + GMP + H(+). It participates in cofactor biosynthesis; adenosylcobalamin biosynthesis; adenosylcobalamin from cob(II)yrinate a,c-diamide: step 7/7. Joins adenosylcobinamide-GDP and alpha-ribazole to generate adenosylcobalamin (Ado-cobalamin). Also synthesizes adenosylcobalamin 5'-phosphate from adenosylcobinamide-GDP and alpha-ribazole 5'-phosphate. In Nitratidesulfovibrio vulgaris (strain DSM 19637 / Miyazaki F) (Desulfovibrio vulgaris), this protein is Adenosylcobinamide-GDP ribazoletransferase.